The chain runs to 521 residues: NADH-quinone oxidoreductase subunit N (521 aa).

14 helical membrane-spanning segments follow: residues 15 to 35 (LAPELILAAMFLILIVTDLIL), 43 to 63 (IIGWLSLAGLLLSLAAVIWRM), 98 to 118 (LLKIIFLIGTSLVVLLGLGST), 128 to 148 (AEFYYLLLPAAAGAMIMASSG), 150 to 170 (LVTLYIGLELLSITTYVLVGL), 185 to 205 (VVTGGIASAFVLFGMSYLYGV), 227 to 247 (ALVYVGFFFLIAGFGIKIAAA), 261 to 281 (PTPVSAFLAVIAKGAALAAVF), 303 to 323 (VFFALLVIAAAAMIAGTVSAL), 331 to 351 (LLALSGVANAGYLLVPIAISV), 363 to 383 (VFYLVAYLLMNVGAFAVVTVI), 406 to 426 (AAAMLIFILSFSGLPVTAGFF), 442 to 462 (WLVAIMVVSTVISYYFYFGII), and 485 to 505 (TVIWICAAATVALGVLPGPLM).

This sequence belongs to the complex I subunit 2 family. NDH-1 is composed of 14 different subunits. Subunits NuoA, H, J, K, L, M, N constitute the membrane sector of the complex.

The protein resides in the cell membrane. The catalysed reaction is a quinone + NADH + 5 H(+)(in) = a quinol + NAD(+) + 4 H(+)(out). In terms of biological role, NDH-1 shuttles electrons from NADH, via FMN and iron-sulfur (Fe-S) centers, to quinones in the respiratory chain. The immediate electron acceptor for the enzyme in this species is believed to be a menaquinone. Couples the redox reaction to proton translocation (for every two electrons transferred, four hydrogen ions are translocated across the cytoplasmic membrane), and thus conserves the redox energy in a proton gradient. This chain is NADH-quinone oxidoreductase subunit N, found in Paenibacillus sp. (strain JDR-2).